A 282-amino-acid polypeptide reads, in one-letter code: 2-dehydro-3-deoxyphosphooctonate aldolase (282 aa).

This sequence belongs to the KdsA family.

It is found in the cytoplasm. It catalyses the reaction D-arabinose 5-phosphate + phosphoenolpyruvate + H2O = 3-deoxy-alpha-D-manno-2-octulosonate-8-phosphate + phosphate. It participates in carbohydrate biosynthesis; 3-deoxy-D-manno-octulosonate biosynthesis; 3-deoxy-D-manno-octulosonate from D-ribulose 5-phosphate: step 2/3. The protein operates within bacterial outer membrane biogenesis; lipopolysaccharide biosynthesis. This chain is 2-dehydro-3-deoxyphosphooctonate aldolase, found in Shewanella oneidensis (strain ATCC 700550 / JCM 31522 / CIP 106686 / LMG 19005 / NCIMB 14063 / MR-1).